Here is a 289-residue protein sequence, read N- to C-terminus: MADKHKHVDEVSGVETTGHEWDGIRELNNPMPRWWVYSFYATIIWAIGYAIAYPSWPMLTEATKGMLGYSSRAEVSVELAAAKAAQAGNLEQIASSSVEEIIANPQLQQFAVSAGASAFKVNCAQCHGSGAAGGQGFPNLNDDDWLWGGKPQEIYQTIAHGVRHAPDGETRVSEMPPFGDMLTPELMQQTAAYVVSLTQAPSQPHLVQQGKQVFADNCASCHGADAKGNREMGAPNLADAIWLKGEGEQAVITQMKTPKHGVMPAWLPRLGDDTVKQLAVFVHSLGGGE.

Topologically, residues 1–33 are cytoplasmic; it reads MADKHKHVDEVSGVETTGHEWDGIRELNNPMPR. The chain crosses the membrane as a helical span at residues 34–56; the sequence is WWVYSFYATIIWAIGYAIAYPSW. The Periplasmic segment spans residues 57-289; the sequence is PMLTEATKGM…VFVHSLGGGE (233 aa). Cytochrome c domains lie at 110 to 198 and 205 to 286; these read FAVS…VSLT and HLVQ…HSLG. Heme c contacts are provided by Cys-123, Cys-126, His-127, Met-175, Cys-218, Cys-221, His-222, and Met-263.

It belongs to the CcoP / FixP family. As to quaternary structure, component of the cbb3-type cytochrome c oxidase at least composed of FixN, FixO, FixQ and FixP. Heme c is required as a cofactor.

It localises to the cell inner membrane. Its pathway is energy metabolism; oxidative phosphorylation. Its function is as follows. C-type cytochrome. Part of the cbb3-type cytochrome c oxidase complex. FixP subunit is required for transferring electrons from donor cytochrome c via its heme groups to FixO subunit. From there, electrons are shuttled to the catalytic binuclear center of FixN subunit where oxygen reduction takes place. The complex also functions as a proton pump. The chain is Cbb3-type cytochrome c oxidase subunit FixP from Rhizobium meliloti (strain 1021) (Ensifer meliloti).